Here is a 120-residue protein sequence, read N- to C-terminus: Ribonuclease P protein component 2 (120 aa).

This sequence belongs to the eukaryotic/archaeal RNase P protein component 2 family. In terms of assembly, homodimer in solution. Component of RNase P which consists of a catalytic RNA component and at least 5 protein subunits. Forms a heterotetrameric subcomplex with Rnp3. Reconstituted enzyme missing individual protein subunits is suboptimally active, showing each subunit contributes to optimization of activity.

It localises to the cytoplasm. The enzyme catalyses Endonucleolytic cleavage of RNA, removing 5'-extranucleotides from tRNA precursor.. Its function is as follows. Part of ribonuclease P, a protein complex that generates mature tRNA molecules by cleaving their 5'-ends. This is Ribonuclease P protein component 2 from Pyrococcus horikoshii (strain ATCC 700860 / DSM 12428 / JCM 9974 / NBRC 100139 / OT-3).